The primary structure comprises 335 residues: Glycerol-3-phosphate dehydrogenase [NAD(P)+] (335 aa).

Residues serine 12, tryptophan 13, and lysine 107 each contribute to the NADPH site. The sn-glycerol 3-phosphate site is built by lysine 107, glycine 138, and serine 140. Position 142 (alanine 142) interacts with NADPH. 5 residues coordinate sn-glycerol 3-phosphate: lysine 193, aspartate 246, serine 256, arginine 257, and asparagine 258. The Proton acceptor role is filled by lysine 193. Arginine 257 lines the NADPH pocket. NADPH-binding residues include valine 281 and glutamate 283.

Belongs to the NAD-dependent glycerol-3-phosphate dehydrogenase family.

The protein resides in the cytoplasm. It catalyses the reaction sn-glycerol 3-phosphate + NAD(+) = dihydroxyacetone phosphate + NADH + H(+). It carries out the reaction sn-glycerol 3-phosphate + NADP(+) = dihydroxyacetone phosphate + NADPH + H(+). Its pathway is membrane lipid metabolism; glycerophospholipid metabolism. Functionally, catalyzes the reduction of the glycolytic intermediate dihydroxyacetone phosphate (DHAP) to sn-glycerol 3-phosphate (G3P), the key precursor for phospholipid synthesis. This is Glycerol-3-phosphate dehydrogenase [NAD(P)+] from Geobacter sp. (strain M21).